Here is a 667-residue protein sequence, read N- to C-terminus: Receptor for retinol uptake STRA6 (667 aa).

Residues 1–13 are compositionally biased toward polar residues; sequence MSSQPAGNQTSPG. The segment at 1-22 is disordered; sequence MSSQPAGNQTSPGPTEDYSYGS. The Extracellular portion of the chain corresponds to 1–50; the sequence is MSSQPAGNQTSPGPTEDYSYGSWYIDEPQGGEELQPEGEVPSCHTSIPPS. N-linked (GlcNAc...) asparagine glycosylation is present at Asn8. A helical transmembrane segment spans residues 51–71; it reads LYHACLASLSILVLLLLAMLV. Topologically, residues 72–98 are cytoplasmic; the sequence is RRRQLWPDCVRGRPGLPSPVDFLAGDR. Residues 99-119 traverse the membrane as a helical segment; that stretch reads PQAVPAAVFVVLFSSLCLLLP. The Extracellular segment spans residues 120–144; that stretch reads DEDPLPFLTLASAPSQDGKTEAPRG. The helical transmembrane segment at 145-165 threads the bilayer; that stretch reads AWKILGLFYYAALCYPLAACA. The Cytoplasmic portion of the chain corresponds to 166 to 168; it reads TAG. A helical transmembrane segment spans residues 169-189; sequence HTAAHLLGSTLSWAHLGVQVW. Residues 190-205 lie on the Extracellular side of the membrane; the sequence is QRAECPQVPKIYKYYS. Residues 206-226 traverse the membrane as a helical segment; sequence LLASLPLLLGLGFLSLWYPVQ. Over 227-295 the chain is Cytoplasmic; sequence LVRSFSCRTG…PQPGFRLPLK (69 aa). The segment at 235-293 is interaction with RBP1; the sequence is TGAGSKGLQSSYSEEYLRNLLCRKKLGSSSHTSKHGFLSWAWVCLRHCIYTPQPGFRLP. A helical transmembrane segment spans residues 296-316; the sequence is LVLSATLTGTAIYQVALLLLV. Residues 317–367 lie on the Extracellular side of the membrane; it reads GMVPNIQKVRAGVTTDVSYLLAGFGIVLSEDKQEVVELVKHHLWALEVCYI. The helical transmembrane segment at 368 to 388 threads the bilayer; sequence SALVLSCSLTFLVLMRSLVTH. The Cytoplasmic portion of the chain corresponds to 389–422; sequence RTNLRALHRGAALDSSPLHRSPHPSRRAIFCWMS. The chain crosses the membrane as a helical span at residues 423–443; sequence FSAYQTAFICLGLLVQQIIFF. The Extracellular portion of the chain corresponds to 444-473; sequence LGTTALAFLVLMPVLHGRNLLLFRSLESSW. Residues 474 to 494 form a helical membrane-spanning segment; it reads PFWLTLALAVILQSMAAHWVF. Topologically, residues 495–509 are cytoplasmic; that stretch reads LETHDGHPQLTNRRV. Residues 510 to 547 constitute an intramembrane region (helical); it reads LYAATFLLFPLNVLVGAMVATWRVLLSALYNAIHLGQM. At 548–667 the chain is on the cytoplasmic side; the sequence is DLSLLPPRAA…ALLGANGAQP (120 aa). Tyr643 is modified (phosphotyrosine).

In terms of assembly, homodimer. Interacts with JAK2 and STAT5. Interacts (via extracellular domains) with RBP4. Interacts (via cytoplasmic domains) with RBP1. In terms of processing, phosphorylated on tyrosine residues in response to RBP4 binding. Phosphorylation requires the presence of LRAT, suggesting it may be triggered by the uptake of retinol that is then metabolized within the cell to retinoids that function as signaling molecules.

It is found in the cell membrane. Functions as a retinol transporter. Accepts all-trans retinol from the extracellular retinol-binding protein RBP4, facilitates retinol transport across the cell membrane, and then transfers retinol to the cytoplasmic retinol-binding protein RBP1. Retinol uptake is enhanced by LRAT, an enzyme that converts retinol to all-trans retinyl esters, the storage forms of vitamin A. Contributes to the activation of a signaling cascade that depends on retinol transport and LRAT-dependent generation of retinol metabolites that then trigger activation of JAK2 and its target STAT5, and ultimately increase the expression of SOCS3 and inhibit cellular responses to insulin. Important for the homeostasis of vitamin A and its derivatives, such as retinoic acid. STRA6-mediated transport is particularly important in the eye, and under conditions of dietary vitamin A deficiency. Does not transport retinoic acid. The chain is Receptor for retinol uptake STRA6 (STRA6) from Pongo abelii (Sumatran orangutan).